Reading from the N-terminus, the 753-residue chain is MTIINHTLGFPRVGLRRELKKAQESYWAGNSTREELLAVGRELRARHWDQQKQAGIDLLPVGDFAWYDHVLTTSLLLGNVPQRHQNNDGSVDIDTLFRIGRGRAPTGEPAAAAEMTKWFNTNYHYMVPEFVKGQQFKLTWTQLLEEVDEALALGHKVKPVLLGPITYLWLGKVKGEQFDRLSLLNDILPVYQQVLAELAKRGIEWVQIDEPALVLELPQAWLNAYKPAYDALQGQVKLLLTTYFEGVTPNLDTITALPVQGLHVDLVHGKDDVAELHKRLPSDWLLSAGLINGRNVWRADLTEKYAQIKDIVGKRDLWVASSCSLLHSPIDLSVETRLDAEVKSWFAFALQKCHELALLRDALNSGDTAALAEWSAPIQARRHSTRVHNPAVEKRLAAITAQDSQRANVYEVRAEAQRARFKLPAWPTTTIGSFPQTTEIRTLRLDFKKGNLDANNYRTGIAEHIKQAIVEQERLGLDVLVHGEAERNDMVEYFGEHLDGFVFTQNGWVQSYGSRCVKPPIVIGDVSRPAPITVEWAKYAQSLTDKPVKGMLTGPVTILCWSFPREDVSRETIAKQIALALRDEVADLEAAGIGIIQIDEPALREGLPLRRSDWDAYLQWGVEAFRINAAVAKDDTQIHTHMCYCEFNDIMDSIAALDADVITIETSRSDMELLESFEEFDYPNEIGPGVYDIHSPNVPSVEWIEALLKKAAKRIPAERLWVNPDCGLKTRGWPETRAALANMVQAAQNLRRG.

5-methyltetrahydropteroyltri-L-glutamate contacts are provided by residues 17–20 and lysine 117; that span reads RELK. L-homocysteine is bound by residues 431–433 and glutamate 484; that span reads IGS. L-methionine contacts are provided by residues 431–433 and glutamate 484; that span reads IGS. Residues 515–516 and tryptophan 561 each bind 5-methyltetrahydropteroyltri-L-glutamate; that span reads RC. Aspartate 599 serves as a coordination point for L-homocysteine. Aspartate 599 contributes to the L-methionine binding site. Glutamate 605 contacts 5-methyltetrahydropteroyltri-L-glutamate. 3 residues coordinate Zn(2+): histidine 641, cysteine 643, and glutamate 665. Histidine 694 acts as the Proton donor in catalysis. Cysteine 726 contacts Zn(2+).

It belongs to the vitamin-B12 independent methionine synthase family. It depends on Zn(2+) as a cofactor.

The catalysed reaction is 5-methyltetrahydropteroyltri-L-glutamate + L-homocysteine = tetrahydropteroyltri-L-glutamate + L-methionine. It participates in amino-acid biosynthesis; L-methionine biosynthesis via de novo pathway; L-methionine from L-homocysteine (MetE route): step 1/1. Catalyzes the transfer of a methyl group from 5-methyltetrahydrofolate to homocysteine resulting in methionine formation. The sequence is that of 5-methyltetrahydropteroyltriglutamate--homocysteine methyltransferase from Escherichia coli O1:K1 / APEC.